The sequence spans 540 residues: Chaperonin GroEL (540 aa).

Residues 29 to 32, 86 to 90, Gly413, 476 to 478, and Asp492 contribute to the ATP site; these read TIGP, DGTTT, and NAA.

The protein belongs to the chaperonin (HSP60) family. In terms of assembly, forms a cylinder of 14 subunits composed of two heptameric rings stacked back-to-back. Interacts with the co-chaperonin GroES.

The protein resides in the cytoplasm. It catalyses the reaction ATP + H2O + a folded polypeptide = ADP + phosphate + an unfolded polypeptide.. Functionally, together with its co-chaperonin GroES, plays an essential role in assisting protein folding. The GroEL-GroES system forms a nano-cage that allows encapsulation of the non-native substrate proteins and provides a physical environment optimized to promote and accelerate protein folding. In Staphylococcus saprophyticus subsp. saprophyticus (strain ATCC 15305 / DSM 20229 / NCIMB 8711 / NCTC 7292 / S-41), this protein is Chaperonin GroEL.